Here is a 338-residue protein sequence, read N- to C-terminus: Fructose-1,6-bisphosphatase class 1 1 (338 aa).

Positions 91, 113, 115, and 116 each coordinate Mg(2+). Residues Asp116–Ser119, Asn208, and Lys274 contribute to the substrate site. Residue Glu280 participates in Mg(2+) binding.

It belongs to the FBPase class 1 family. In terms of assembly, homotetramer. It depends on Mg(2+) as a cofactor.

It is found in the cytoplasm. The enzyme catalyses beta-D-fructose 1,6-bisphosphate + H2O = beta-D-fructose 6-phosphate + phosphate. The protein operates within carbohydrate biosynthesis; gluconeogenesis. This Cupriavidus necator (strain ATCC 17699 / DSM 428 / KCTC 22496 / NCIMB 10442 / H16 / Stanier 337) (Ralstonia eutropha) protein is Fructose-1,6-bisphosphatase class 1 1.